The following is a 239-amino-acid chain: Sugar fermentation stimulation protein homolog (239 aa).

Belongs to the SfsA family.

The protein is Sugar fermentation stimulation protein homolog of Methylobacterium sp. (strain 4-46).